The primary structure comprises 699 residues: Extracellular matrix protein 2 (699 aa).

Residues 1-20 (MKIAVLFCFFLLIIFQTDFG) form the signal peptide. Residues 101–158 (GHCLVKGITMYNKAVWSPEPCTTCLCSDGRVLCDETMCHPQRCPQTVIPEGECCPVCS) form the VWFC domain. The span at 176–186 (EFSGDSSEQRE) shows a compositional bias: basic and acidic residues. Residues 176–316 (EFSGDSSEQR…PAPPRGTLRL (141 aa)) are disordered. A compositionally biased stretch (acidic residues) spans 212 to 224 (QSEEDEEVKEEDT). The segment covering 243–260 (GDSRGGDRKQRPGEERRL) has biased composition (basic and acidic residues). A compositionally biased stretch (acidic residues) spans 270 to 291 (EEEEDEEEEGEEGEEDEEDEED). A Cell attachment site motif is present at residues 294–296 (RGD). In terms of domain architecture, LRRNT spans 307–344 (PAPPRGTLRLPSGCSLSYRTISCINAMLTQIPPLTAPQ). LRR repeat units follow at residues 368 to 388 (NLERLDLSKNNITSSGIGPKA), 394 to 415 (KLMRLNMDGNNLIQIPSQLPST), 416 to 436 (LEELKVNENNLQAIDEESLSD), 439 to 459 (QLVTLELEGNNLSEANVNPLA), 465 to 484 (SLAYLRLGKNKFRIIPQGLP), 486 to 507 (SIEELYLENNQIEEITEICFNH), 510 to 530 (KINVIVLRYNKIEENRIAPLA), 536 to 557 (NLESIDLSYNKLYHVPSYLPKS), 558 to 578 (LLHLVLLGNQIERIPGYVFGH), 582 to 602 (GLEYLYLSFNKLADDGMDRVS), 609 to 630 (SLRELFLDHNDLKSIPPGIQEM), 632 to 653 (ALHFLRLNNNKIRNILPEEICN), and 661 to 684 (NLEHLHLENNYIKIREIPSYTFSC). A glycan (N-linked (GlcNAc...) asparagine) is linked at Asn378. N-linked (GlcNAc...) asparagine glycosylation is present at Asn449. Asn506 carries an N-linked (GlcNAc...) asparagine glycan.

This sequence belongs to the small leucine-rich proteoglycan (SLRP) family. SLRP class I subfamily. In terms of assembly, interacts with numerous extracellular matrix proteins. Interacts with MSL1 and RASSF1. As to expression, expressed predominantly in adipose tissue as well as female-specific organs such as mammary gland, ovary, and uterus.

It is found in the secreted. The protein resides in the extracellular space. The protein localises to the extracellular matrix. Promotes matrix assembly and cell adhesiveness. This Homo sapiens (Human) protein is Extracellular matrix protein 2 (ECM2).